A 335-amino-acid chain; its full sequence is MAAQNNNKDVAALVEKITGLHAAIAKLPSLSPSPDVDALFTELVTACVPPSPVDVTKLGPEAQEMREGLIRLCSEAEGKLEAHYSDMLAAFDNPLDHLGIFPYYSNYINLSKLEYELLARYVRRHRPARVAFIGSGPLPFSSFVLAARHLPDTMFDNYDLCGAANDRASKLFRADTDVGARMSFHTADVADLASELAKYDVVFLAALVGMAAEDKAKVIAHLGAHMADGAALVVRSAHGARGFLYPIVDPQDIGRGGFEVLAVCHPDDDVVNSVIIAQKSKEVHADGLGSARGAGRQYARGTVPVVSPPCRFGEMVADVTQNHKRDEFANAEVAF.

Belongs to the nicotianamine synthase (NAS)-like family.

The catalysed reaction is 3 S-adenosyl-L-methionine = nicotianamine + 3 S-methyl-5'-thioadenosine + 3 H(+). Functionally, synthesizes nicotianamine, a polyamine that is the first intermediate in the synthesis of the phytosiderophores of the mugineic acid type found in gramineae which serves as a sensor for the physiological iron status within the plant, and/or might be involved in the transport of iron. In Hordeum vulgare (Barley), this protein is Probable nicotianamine synthase 3 (NAS3).